Here is a 256-residue protein sequence, read N- to C-terminus: Floral homeotic protein APETALA 1 (256 aa).

Residues Met1–Ser61 form the MADS-box domain. One can recognise a K-box domain in the interval Asn88–Ile178.

As to quaternary structure, homodimer capable of binding to CArG-box sequences.

The protein resides in the nucleus. Transcription factor that promotes early floral meristem identity in synergy with LEAFY. Displays a redundant function with CAULIFLOWER in the up-regulation of LEAFY. Required subsequently for the transition of an inflorescence meristem into a floral meristem, and for the normal development of sepals and petals in flowers. Regulates positively B class homeotic proteins. The protein is Floral homeotic protein APETALA 1 (AP1) of Citrus sinensis (Sweet orange).